Consider the following 1030-residue polypeptide: Alpha-L-rhamnosidase (1030 aa).

The tract at residues 133–297 is carbohydrate-binding module-67 (CBM67); it reads PSLEGSSWIW…GAGPWGRVAP (165 aa). Positions 179 and 180 each coordinate Ca(2+). Alpha-L-rhamnose is bound by residues 179–180 and Trp-203; that span reads DN. Residues Asn-228 and Pro-233 each contribute to the Ca(2+) site. Alpha-L-rhamnose is bound by residues Asp-630, 634 to 636, Asp-643, and Trp-695; that span reads RDE. Glu-636 acts as the Proton donor in catalysis. The Proton acceptor role is filled by Glu-895. His-916 provides a ligand contact to alpha-L-rhamnose.

This sequence belongs to the glycosyl hydrolase 78 family.

The enzyme catalyses Hydrolysis of terminal non-reducing alpha-L-rhamnose residues in alpha-L-rhamnosides.. Functionally, alpha-L-rhamnosidase which is able to degrade p-nitrophenyl-alpha-L-rhamnopyranoside (PNP-Rha) in vitro. Releases L-rhamnose from citrus flavonoids such as naringin, rutin and hesperidin, and the arabinogalactan-protein (AGP) gum arabic. AGPs are a family of proteoglycans that are localized on the cell surfaces of higher plants. Cleaves both the alpha-1,6 and the alpha-1,2-linked rhamnosyl residues. The polypeptide is Alpha-L-rhamnosidase (Streptomyces avermitilis (strain ATCC 31267 / DSM 46492 / JCM 5070 / NBRC 14893 / NCIMB 12804 / NRRL 8165 / MA-4680)).